Reading from the N-terminus, the 188-residue chain is dCTP deaminase (188 aa).

109–114 (KSTYAR) contributes to the dCTP binding site. The Proton donor/acceptor role is filled by Glu135. 3 residues coordinate dCTP: Gln154, Tyr168, and Gln178.

This sequence belongs to the dCTP deaminase family. Homotrimer.

The catalysed reaction is dCTP + H2O + H(+) = dUTP + NH4(+). Its pathway is pyrimidine metabolism; dUMP biosynthesis; dUMP from dCTP (dUTP route): step 1/2. In terms of biological role, catalyzes the deamination of dCTP to dUTP. The polypeptide is dCTP deaminase (Helicobacter pylori (strain Shi470)).